Reading from the N-terminus, the 381-residue chain is Probable G-protein coupled receptor 34 (381 aa).

Residues 1-61 (MRSHTITMTT…LLSTVLTTSY (61 aa)) lie on the Extracellular side of the membrane. Residues asparagine 28, asparagine 36, and asparagine 42 are each glycosylated (N-linked (GlcNAc...) asparagine). The chain crosses the membrane as a helical span at residues 62–82 (SVIFIVGLVGNIIALYVFLGI). The Cytoplasmic portion of the chain corresponds to 83-88 (HRKRNS). A helical transmembrane segment spans residues 89–109 (IQIYLLNVAIADLLLIFCLPF). Topologically, residues 110–128 (RIMYHINQNKWTLGVILCK) are extracellular. A disulfide bond links cysteine 127 and cysteine 204. The helical transmembrane segment at 129 to 149 (VVGTLFYMNMYISIILLGFIS) threads the bilayer. Topologically, residues 150–171 (LDRYIKINRSIQQRKAITTKQS) are cytoplasmic. The helical transmembrane segment at 172 to 192 (IYVCCIVWMLALGGFLTMIIL) threads the bilayer. At 193–216 (TLKKGGHNSTMCFHYRDKHNAKGE) the chain is on the extracellular side. Asparagine 200 carries an N-linked (GlcNAc...) asparagine glycan. Residues 217-237 (AIFNFILVVMFWLIFLLIILS) traverse the membrane as a helical segment. Residues 238–269 (YIKIGKNLLRISKRRSKFPNSGKYATTARNSF) are Cytoplasmic-facing. A helical membrane pass occupies residues 270–290 (IVLIIFTICFVPYHAFRFIYI). The Extracellular segment spans residues 291 to 310 (SSQLNVSSCYWKEIVHKTNE). Asparagine 295 carries N-linked (GlcNAc...) asparagine glycosylation. A helical transmembrane segment spans residues 311–331 (IMLVLSSFNSCLDPVMYFLMS). At 332–381 (SNIRKIMCQLLFRRFQGEPSRSESTSEFKPGYSLHDTSVAVKIQSSSKST) the chain is on the cytoplasmic side.

The protein belongs to the G-protein coupled receptor 1 family.

It localises to the cell membrane. Functionally, G-protein-coupled receptor of lysophosphatidylserine (LysoPS) that plays different roles in immune response. Acts a damage-sensing receptor that triggers tissue repair upon recognition of dying neutrophils. Mechanistically, apoptotic neutrophils release lysophosphatydilserine that are recognized by type 3 innate lymphoid cells (ILC3s) via GPR34, which activates downstream PI3K-AKT and RAS-ERK signaling pathways leading to STAT3 activation and IL-22 production. Plays an important role in microglial function, controlling morphology and phagocytosis. The protein is Probable G-protein coupled receptor 34 (GPR34) of Gorilla gorilla gorilla (Western lowland gorilla).